A 345-amino-acid chain; its full sequence is RNA polymerase II holoenzyme cyclin-like subunit (345 aa).

Positions Glu-23–Ile-147 constitute a Cyclin N-terminal domain.

It belongs to the cyclin family. Cyclin C subfamily. Component of the SRB8-11 complex, a regulatory module of the Mediator complex.

Its subcellular location is the nucleus. Functionally, component of the SRB8-11 complex. The SRB8-11 complex is a regulatory module of the Mediator complex which is itself involved in regulation of basal and activated RNA polymerase II-dependent transcription. The SRB8-11 complex may be involved in the transcriptional repression of a subset of genes regulated by Mediator. It may inhibit the association of the Mediator complex with RNA polymerase II to form the holoenzyme complex. The SRB8-11 complex phosphorylates the C-terminal domain (CTD) of the largest subunit of RNA polymerase II. The polypeptide is RNA polymerase II holoenzyme cyclin-like subunit (SSN8) (Debaryomyces hansenii (strain ATCC 36239 / CBS 767 / BCRC 21394 / JCM 1990 / NBRC 0083 / IGC 2968) (Yeast)).